The primary structure comprises 284 residues: Formamidopyrimidine-DNA glycosylase (284 aa).

The Schiff-base intermediate with DNA role is filled by proline 2. Glutamate 3 serves as the catalytic Proton donor. Catalysis depends on lysine 61, which acts as the Proton donor; for beta-elimination activity. DNA-binding residues include histidine 95, arginine 114, and arginine 159. An FPG-type zinc finger spans residues 244–278; it reads WVYGRKGQPCRVCNTPIERIRLAGRSTHFCPTCQR. The Proton donor; for delta-elimination activity role is filled by arginine 268.

The protein belongs to the FPG family. As to quaternary structure, monomer. Zn(2+) is required as a cofactor.

The enzyme catalyses Hydrolysis of DNA containing ring-opened 7-methylguanine residues, releasing 2,6-diamino-4-hydroxy-5-(N-methyl)formamidopyrimidine.. It carries out the reaction 2'-deoxyribonucleotide-(2'-deoxyribose 5'-phosphate)-2'-deoxyribonucleotide-DNA = a 3'-end 2'-deoxyribonucleotide-(2,3-dehydro-2,3-deoxyribose 5'-phosphate)-DNA + a 5'-end 5'-phospho-2'-deoxyribonucleoside-DNA + H(+). Its function is as follows. Involved in base excision repair of DNA damaged by oxidation or by mutagenic agents. Acts as a DNA glycosylase that recognizes and removes damaged bases. Has a preference for oxidized purines, such as 7,8-dihydro-8-oxoguanine (8-oxoG). Has AP (apurinic/apyrimidinic) lyase activity and introduces nicks in the DNA strand. Cleaves the DNA backbone by beta-delta elimination to generate a single-strand break at the site of the removed base with both 3'- and 5'-phosphates. In Gloeobacter violaceus (strain ATCC 29082 / PCC 7421), this protein is Formamidopyrimidine-DNA glycosylase.